The sequence spans 92 residues: DNA-directed RNA polymerase subunit omega (92 aa).

It belongs to the RNA polymerase subunit omega family. The RNAP catalytic core consists of 2 alpha, 1 beta, 1 beta' and 1 omega subunit. When a sigma factor is associated with the core the holoenzyme is formed, which can initiate transcription.

It catalyses the reaction RNA(n) + a ribonucleoside 5'-triphosphate = RNA(n+1) + diphosphate. Its function is as follows. Promotes RNA polymerase assembly. Latches the N- and C-terminal regions of the beta' subunit thereby facilitating its interaction with the beta and alpha subunits. The sequence is that of DNA-directed RNA polymerase subunit omega from Shewanella baltica (strain OS223).